Consider the following 436-residue polypeptide: Citrate synthase (436 aa).

Residues His311 and Asp370 contribute to the active site.

The protein belongs to the citrate synthase family. As to quaternary structure, homohexamer.

The catalysed reaction is oxaloacetate + acetyl-CoA + H2O = citrate + CoA + H(+). It participates in carbohydrate metabolism; tricarboxylic acid cycle; isocitrate from oxaloacetate: step 1/2. Allosterically inhibited by NADH. The polypeptide is Citrate synthase (gltA) (Rickettsia prowazekii (strain Madrid E)).